A 439-amino-acid chain; its full sequence is Ornithine aminotransferase, mitochondrial (439 aa).

The N-terminal 25 residues, 1–25 (MFSKLAHLQRFAVLSRGVHSSVASA), are a transit peptide targeting the mitochondrion; in hepatic form. The N-terminal 35 residues, 1–35 (MFSKLAHLQRFAVLSRGVHSSVASATSVATKKTVQ), are a transit peptide targeting the mitochondrion; in renal form. Residues lysine 49 and lysine 66 each carry the N6-acetyllysine modification. Lysine 102 carries the post-translational modification N6-succinyllysine. Lysine 107 bears the N6-acetyllysine; alternate mark. Lysine 107 carries the post-translational modification N6-succinyllysine; alternate. Lysine 292 carries the N6-(pyridoxal phosphate)lysine modification. An N6-acetyllysine; alternate modification is found at lysine 362. Lysine 362 is subject to N6-succinyllysine; alternate. Lysine 386 and lysine 392 each carry N6-acetyllysine. Lysine 405 bears the N6-acetyllysine; alternate mark. N6-succinyllysine; alternate is present on lysine 405. The residue at position 421 (lysine 421) is an N6-acetyllysine.

Belongs to the class-III pyridoxal-phosphate-dependent aminotransferase family. As to quaternary structure, homohexamer. Pyridoxal 5'-phosphate is required as a cofactor.

Its subcellular location is the mitochondrion matrix. The catalysed reaction is L-ornithine + 2-oxoglutarate = L-glutamate 5-semialdehyde + L-glutamate. It participates in amino-acid biosynthesis; L-proline biosynthesis; L-glutamate 5-semialdehyde from L-ornithine: step 1/1. Functionally, catalyzes the reversible interconversion of L-ornithine and 2-oxoglutarate to L-glutamate semialdehyde and L-glutamate. This is Ornithine aminotransferase, mitochondrial (OAT) from Homo sapiens (Human).